The following is a 759-amino-acid chain: LIM domain and actin-binding protein 1 (759 aa).

Methionine 1 carries the N-acetylmethionine modification. Phosphoserine occurs at positions 4, 15, and 55. The disordered stretch occupies residues 78 to 131 (NPGLGAESHTDSLRNSSTEIRHRADHPPAEVTSHAASGAKADQEEQIHPRSRLR). A compositionally biased stretch (basic and acidic residues) spans 96–105 (EIRHRADHPP). Phosphoserine is present on serine 132. The span at 146–177 (KDGEDLKDHSTESKKMENCLGESRHEVEKSEI) shows a compositional bias: basic and acidic residues. The disordered stretch occupies residues 146–182 (KDGEDLKDHSTESKKMENCLGESRHEVEKSEISENTD). Residues 164 to 166 (CLG) carry the Required for interaction with NPC1L1 motif. Phosphoserine is present on residues alanine 183 and serine 225. Disordered stretches follow at residues 211–264 (ILRA…RLSE) and 323–381 (EKIS…AMKK). A Phosphotyrosine modification is found at tyrosine 229. 2 positions are modified to phosphoserine: serine 230 and serine 242. The segment covering 247-258 (DSEKNESRRNLE) has biased composition (basic and acidic residues). 7 positions are modified to phosphoserine: serine 263, serine 343, serine 350, serine 362, serine 365, serine 369, and serine 374. The segment covering 362–376 (SPDSRASSLSESSPP) has biased composition (low complexity). Residues 388–448 (ETCVECQKTV…KPHFNQLFKS (61 aa)) enclose the LIM zinc-binding domain. Lysine 439 carries the N6-succinyllysine modification. Position 490 is a phosphoserine (serine 490). Residues 493-513 (VEDAPIAKVGVLAASMEAKAS) form a required for interaction with MYO5B region. The tract at residues 509 to 709 (EAKASSQQEK…QEPKSLNWSS (201 aa)) is disordered. Basic and acidic residues-rich tracts occupy residues 516 to 527 (QEKEDKPAETKK) and 556 to 567 (WPPEDEISKPEV). A compositionally biased stretch (polar residues) spans 595–607 (ASFQSTSVKSPKT). Phosphoserine is present on residues serine 601, serine 604, serine 609, and serine 617. Residues 644-655 (KNGNVGKTTWQN) are compositionally biased toward polar residues. The span at 656–673 (KESKGETGKRSKEGHSLE) shows a compositional bias: basic and acidic residues. Acidic residues predominate over residues 674–691 (MENENLVENGADSDEDDN). Residues serine 686, serine 692, serine 698, serine 726, and serine 741 each carry the phosphoserine modification. The span at 693 to 709 (FLKQQSPQEPKSLNWSS) shows a compositional bias: polar residues.

As to quaternary structure, interacts with NPC1L1; bridges NPC1L1 with MYO5B. Interacts with MYO5B; bridges NPC1L1 with MYO5B. Interacts with PXN; this complex stabilizes actin dynamics. Interacts with F-actin and G-actin. Interacts with LUZP1 (via C-terminus); both proteins restrict ciliation and may work together to regulate this process. Binds RAB40B (GTP-bound); interaction influences LIMA1 subcellular localization in lamellipodia during cell migration. Post-translationally, ubiquitinated by the ECS(RAB40B) complex leading to its degradation. In terms of processing, phosphorylation of the C-terminal region by MAPK1/MAPK3 reduces its association with F-actin and contributes to actin filament reorganization and enhances cell motility. As to expression, highly expressed in placenta, kidney, pancreas, prostate, ovary, spleen and heart. Also detected in lung, liver, brain, skeletal muscle, thymus, testis and intestine. Not detected in leukocytes. Isoform Beta expressed generally at very low levels. Isoform Alpha abundant in epithelial cells from mammary gland, prostate and in normal oral keratinocytes. Low levels in aortic endothelial cells and dermal fibroblasts. Not detectable in myocardium.

It is found in the cytoplasm. Its subcellular location is the cell junction. The protein resides in the focal adhesion. The protein localises to the cytoskeleton. It localises to the stress fiber. It is found in the cell membrane. Its subcellular location is the cell projection. The protein resides in the ruffle. The protein localises to the lamellipodium. In terms of biological role, actin-binding protein involved in actin cytoskeleton regulation and dynamics. Increases the number and size of actin stress fibers and inhibits membrane ruffling. Inhibits actin filament depolymerization. Bundles actin filaments, delays filament nucleation and reduces formation of branched filaments. Acts as a negative regulator of primary cilium formation. Plays a role in cholesterol homeostasis. Influences plasma cholesterol levels through regulation of intestinal cholesterol absorption. May act as a scaffold protein by regulating NPC1L1 transportation, an essential protein for cholesterol absorption, to the plasma membrane by recruiting MYO5B to NPC1L1, and thus facilitates cholesterol uptake. The chain is LIM domain and actin-binding protein 1 from Homo sapiens (Human).